The sequence spans 235 residues: MTAVRAVVTDIEGTTTPLAFVHEVLFPYARARLADFVAANADDEEVAAALGDARELGGIAGAGDAETLQLLLAWMDEDRKAGPLKLLQGLIWRHGYEEGVLKGEIYADAAAALRLWHGRGLRLFVYSSGSEAAQRLIFGHSDQGDLGPCFEGYFDTRIGAKVDSASYAAIAQSAGLPTREVLFLSDHEGEIKAAREAGMQAVTIDRTLQEEAWMEGPKAGSFSAVERALAPGKSA.

It belongs to the HAD-like hydrolase superfamily. MasA/MtnC family. In terms of assembly, monomer. Mg(2+) is required as a cofactor.

It catalyses the reaction 5-methylsulfanyl-2,3-dioxopentyl phosphate + H2O = 1,2-dihydroxy-5-(methylsulfanyl)pent-1-en-3-one + phosphate. The protein operates within amino-acid biosynthesis; L-methionine biosynthesis via salvage pathway; L-methionine from S-methyl-5-thio-alpha-D-ribose 1-phosphate: step 3/6. It participates in amino-acid biosynthesis; L-methionine biosynthesis via salvage pathway; L-methionine from S-methyl-5-thio-alpha-D-ribose 1-phosphate: step 4/6. Functionally, bifunctional enzyme that catalyzes the enolization of 2,3-diketo-5-methylthiopentyl-1-phosphate (DK-MTP-1-P) into the intermediate 2-hydroxy-3-keto-5-methylthiopentenyl-1-phosphate (HK-MTPenyl-1-P), which is then dephosphorylated to form the acireductone 1,2-dihydroxy-3-keto-5-methylthiopentene (DHK-MTPene). The chain is Enolase-phosphatase E1 from Parvibaculum lavamentivorans (strain DS-1 / DSM 13023 / NCIMB 13966).